Consider the following 246-residue polypeptide: Polyhedrin (246 aa).

It belongs to the polyhedrin family.

Functionally, major component of the virus occlusion bodies, which are large proteinaceous structures (polyhedra), that protect the virus from the outside environment for extended periods until they are ingested by insect larvae. The sequence is that of Polyhedrin (PH) from Mamestra brassicae nuclear polyhedrosis virus (MbNPV).